The primary structure comprises 445 residues: Maltoporin (445 aa).

An N-terminal signal peptide occupies residues 1-24; sequence MITLRKLPLAVAVAAGVMSAQAMA.

This sequence belongs to the porin LamB (TC 1.B.3) family. In terms of assembly, homotrimer formed of three 18-stranded antiparallel beta-barrels, containing three independent channels.

The protein resides in the cell outer membrane. It carries out the reaction beta-maltose(in) = beta-maltose(out). Functionally, involved in the transport of maltose and maltodextrins. The polypeptide is Maltoporin (Shigella flexneri).